Here is a 1062-residue protein sequence, read N- to C-terminus: SLIT-ROBO Rho GTPase-activating protein 1 (1062 aa).

Positions S19–D314 constitute an F-BAR domain. Residues Q352 to A382 adopt a coiled-coil conformation. S416 is modified (phosphoserine). One can recognise a Rho-GAP domain in the interval G481–F671. In terms of domain architecture, SH3 spans C720–M779. Positions D785–P799 are enriched in polar residues. The tract at residues D785 to D931 is disordered. A phosphoserine mark is found at S812 and S894. The segment covering S899–D908 has biased composition (basic and acidic residues). S909 is subject to Phosphoserine. Positions R914–G923 are enriched in polar residues. Residues E933–K960 are a coiled coil. The segment covering K974–P988 has biased composition (polar residues). 2 disordered regions span residues K974 to S1013 and K1028 to M1062. At S976 the chain carries Phosphoserine. Phosphothreonine is present on T978. The segment covering S1004–S1013 has biased composition (low complexity). Residue S1009 is modified to Phosphoserine. The span at Q1053 to M1062 shows a compositional bias: polar residues.

As to quaternary structure, homodimer. Forms a heterooligomer with SRGAP2 and SRGAP3 through its F-BAR domain. Interacts with CDC42 and RHOA. Interacts with FASLG. Interacts (via SH3 domain) with ROBO1.

Its function is as follows. GTPase-activating protein for RhoA and Cdc42 small GTPases. Together with CDC42 seems to be involved in the pathway mediating the repulsive signaling of Robo and Slit proteins in neuronal migration. SLIT2, probably through interaction with ROBO1, increases the interaction of SRGAP1 with ROBO1 and inactivates CDC42. The chain is SLIT-ROBO Rho GTPase-activating protein 1 (Srgap1) from Mus musculus (Mouse).